A 188-amino-acid chain; its full sequence is Peptide deformylase (188 aa).

Fe cation contacts are provided by cysteine 107 and histidine 149. Residue glutamate 150 is part of the active site. Histidine 153 is a binding site for Fe cation.

It belongs to the polypeptide deformylase family. Requires Fe(2+) as cofactor.

The enzyme catalyses N-terminal N-formyl-L-methionyl-[peptide] + H2O = N-terminal L-methionyl-[peptide] + formate. Its function is as follows. Removes the formyl group from the N-terminal Met of newly synthesized proteins. Requires at least a dipeptide for an efficient rate of reaction. N-terminal L-methionine is a prerequisite for activity but the enzyme has broad specificity at other positions. In Thermosynechococcus vestitus (strain NIES-2133 / IAM M-273 / BP-1), this protein is Peptide deformylase.